The chain runs to 79 residues: Sulfur carrier protein TusA (79 aa).

The active-site Cysteine persulfide intermediate is Cys-17.

This sequence belongs to the sulfur carrier protein TusA family.

The protein resides in the cytoplasm. Its function is as follows. Sulfur carrier protein which probably makes part of a sulfur-relay system. In Haemophilus influenzae (strain 86-028NP), this protein is Sulfur carrier protein TusA.